The sequence spans 579 residues: Folliculin (579 aa).

Residues 31-82 are disordered; it reads QGAGSGDSPDQVEQAEEEEGGIQMSSRVRAHSPAEGASSESSSPGPKKSDMC. S62 and S73 each carry phosphoserine. A compositionally biased stretch (low complexity) spans 63-76; sequence PAEGASSESSSPGP. Residues 86–242 form the uDENN FLCN/SMCR8-type domain; sequence RSLAVGHPGY…RNGNAARSLT (157 aa). The stretch at 287 to 310 forms a coiled coil; sequence EKLADLEEESESWDNSEAEEEEKA. Residues 294–308 are compositionally biased toward acidic residues; it reads EESESWDNSEAEEEE. The disordered stretch occupies residues 294 to 323; it reads EESESWDNSEAEEEEKAPVTPEGAEGRELT. A phosphoserine mark is found at S302, S406, S537, S542, and S571. Residues 339 to 491 form the cDENN FLCN/SMCR8-type domain; that stretch reads QPPKLTGFKS…ILNKIEAALT (153 aa). One can recognise a dDENN FLCN/SMCR8-type domain in the interval 493–558; the sequence is QNLSVDVVDQ…LLKFWMTGLS (66 aa).

The protein belongs to the folliculin family. Interacts (via C-terminus) with FNIP1 or FNIP2 (via C-terminus). Component of the lysosomal folliculin complex (LFC), composed of FLCN, FNIP1 (or FNIP2), RagA/RRAGA or RagB/RRAGB GDP-bound, RagC/RRAGC or RagD/RRAGD GTP-bound, and Ragulator. Interaction with FNIP1 or FNIP2 mediates indirect interaction with the PRKAA1, PRKAB1 and PRKAG1 subunits of 5'-AMP-activated protein kinase (AMPK). Interacts with HSP90AA1 in the presence of FNIP1. Interacts with HSP70, STUB1, CDC37, AHSA1, CCT2, STIP1, PTGES3 and PPP5C. Interacts with GABARAP; interaction takes place in the presence of FNIP1 and/or FNIP2. Interacts with RILP; the interaction is direct and promotes association between RILP and RAB34. Interacts with KIF3A and KIF3B. Interacts with lactate dehydrogenase LDHA, but not LDHB; the interaction is direct, may preferentially bind LDHA dimers rather than tetramers, and regulates LDHA activity, acting as an uncompetitive inhibitor. Post-translationally, phosphorylation by ULK1 modulates the interaction with GABARAP and is required to regulate autophagy. In terms of tissue distribution, highly expressed in adult heart, pancreas, and prostate with moderate expression in adult brain, kidney, liver, adipose tissue and lung.

It localises to the lysosome membrane. It is found in the cytoplasm. The protein localises to the cytosol. Its subcellular location is the cell projection. The protein resides in the cilium. It localises to the cytoskeleton. It is found in the microtubule organizing center. The protein localises to the centrosome. Its subcellular location is the spindle. The protein resides in the nucleus. GTPase-activating activity is inhibited in the folliculin complex (LFC), which stabilizes the GDP-bound state of RagA/RRAGA (or RagB/RRAGB), because Arg-164 is located far from the RagC/RRAGC or RagD/RRAGD nucleotide pocket. Disassembly of the LFC complex upon amino acid restimulation liberates the GTPase-activating activity. In terms of biological role, multi-functional protein, involved in both the cellular response to amino acid availability and in the regulation of glycolysis. GTPase-activating protein that plays a key role in the cellular response to amino acid availability through regulation of the non-canonical mTORC1 signaling cascade controlling the MiT/TFE factors TFEB and TFE3. Activates mTORC1 by acting as a GTPase-activating protein: specifically stimulates GTP hydrolysis by RagC/RRAGC or RagD/RRAGD, promoting the conversion to the GDP-bound state of RagC/RRAGC or RagD/RRAGD, and thereby activating the kinase activity of mTORC1. The GTPase-activating activity is inhibited during starvation and activated in presence of nutrients. Acts as a key component for non-canonical mTORC1-dependent control of the MiT/TFE factors TFEB and TFE3, while it is not involved in mTORC1-dependent phosphorylation of canonical RPS6KB1/S6K1 and EIF4EBP1/4E-BP1. In low-amino acid conditions, the lysosomal folliculin complex (LFC) is formed on the membrane of lysosomes, which inhibits the GTPase-activating activity of FLCN, inactivates mTORC1 and maximizes nuclear translocation of TFEB and TFE3. Upon amino acid restimulation, RagA/RRAGA (or RagB/RRAGB) nucleotide exchange promotes disassembly of the LFC complex and liberates the GTPase-activating activity of FLCN, leading to activation of mTORC1 and subsequent cytoplasmic retention of TFEB and TFE3. Indirectly acts as a positive regulator of Wnt signaling by promoting mTOR-dependent cytoplasmic retention of MiT/TFE factor TFE3. Required for the exit of hematopoietic stem cell from pluripotency by promoting mTOR-dependent cytoplasmic retention of TFE3, thereby increasing Wnt signaling. Involved in the control of embryonic stem cells differentiation; together with LAMTOR1 it is necessary to recruit and activate RagC/RRAGC and RagD/RRAGD at the lysosomes, and to induce exit of embryonic stem cells from pluripotency via non-canonical, mTOR-independent TFE3 inactivation. Acts as an inhibitor of browning of adipose tissue by regulating mTOR-dependent cytoplasmic retention of TFE3. In response to flow stress, regulates STK11/LKB1 accumulation and mTORC1 activation through primary cilia: may act by recruiting STK11/LKB1 to primary cilia for activation of AMPK resided at basal bodies, causing mTORC1 down-regulation. Together with FNIP1 and/or FNIP2, regulates autophagy: following phosphorylation by ULK1, interacts with GABARAP and promotes autophagy. Required for starvation-induced perinuclear clustering of lysosomes by promoting association of RILP with its effector RAB34. Regulates glycolysis by binding to lactate dehydrogenase LDHA, acting as an uncompetitive inhibitor. The protein is Folliculin of Mus musculus (Mouse).